A 168-amino-acid polypeptide reads, in one-letter code: Endoribonuclease YbeY (168 aa).

Positions 132, 136, and 142 each coordinate Zn(2+).

Belongs to the endoribonuclease YbeY family. The cofactor is Zn(2+).

The protein localises to the cytoplasm. In terms of biological role, single strand-specific metallo-endoribonuclease involved in late-stage 70S ribosome quality control and in maturation of the 3' terminus of the 16S rRNA. The sequence is that of Endoribonuclease YbeY from Clostridium perfringens (strain ATCC 13124 / DSM 756 / JCM 1290 / NCIMB 6125 / NCTC 8237 / Type A).